The primary structure comprises 481 residues: UDP-N-acetylmuramate--L-alanine ligase (481 aa).

Gly115–Thr121 is an ATP binding site.

This sequence belongs to the MurCDEF family.

Its subcellular location is the cytoplasm. The catalysed reaction is UDP-N-acetyl-alpha-D-muramate + L-alanine + ATP = UDP-N-acetyl-alpha-D-muramoyl-L-alanine + ADP + phosphate + H(+). Its pathway is cell wall biogenesis; peptidoglycan biosynthesis. In terms of biological role, cell wall formation. The sequence is that of UDP-N-acetylmuramate--L-alanine ligase from Granulibacter bethesdensis (strain ATCC BAA-1260 / CGDNIH1).